The primary structure comprises 414 residues: MVSTFSRKDQNYKNDDLNQPSKEGRFGKYGGQYVPETLMPALFELETAASNAWKDKLFVEELNHLLKTYVGRETPLYEAKRLTEHYKTKQATPRIWLKREDLNHTGAHKINNALGQALLAIRMGKKRIIAETGAGQHGVATATVCARFGLKCIIYMGAEDIKRQSLNVFRMKLLGAEVKVVNSGTATLKDATSEAIRDWVSNVETTHYILGSVAGPHPFPKIVRDFHAVIGEETKKQCLESFGSFPDILLACVGGGSNAMGLFHPFVKETSVRLIGVEAAGSGVDTDKHAATITKGSVGILHGSMSLLLQDDNGQVQEAHSISAGLDYPGVGPEHSHLKEIGRAEYGSVTDQEALDALKLVSELEGIIPALETSHAFAWLDKLCPTLEKDTHIVINCSGRGDKDVNTVASSLDI.

The span at 1–26 shows a compositional bias: basic and acidic residues; sequence MVSTFSRKDQNYKNDDLNQPSKEGRF. Residues 1–27 are disordered; the sequence is MVSTFSRKDQNYKNDDLNQPSKEGRFG. Residue Lys-109 is modified to N6-(pyridoxal phosphate)lysine.

Belongs to the TrpB family. In terms of assembly, tetramer of two alpha and two beta chains. Pyridoxal 5'-phosphate is required as a cofactor.

The catalysed reaction is (1S,2R)-1-C-(indol-3-yl)glycerol 3-phosphate + L-serine = D-glyceraldehyde 3-phosphate + L-tryptophan + H2O. Its pathway is amino-acid biosynthesis; L-tryptophan biosynthesis; L-tryptophan from chorismate: step 5/5. The beta subunit is responsible for the synthesis of L-tryptophan from indole and L-serine. This is Tryptophan synthase beta chain from Prochlorococcus marinus (strain MIT 9301).